A 1058-amino-acid polypeptide reads, in one-letter code: Carbamoyl phosphate synthase large chain (1058 aa).

The tract at residues 1 to 401 (MPKRTDIQKI…SLLKACRSLE (401 aa)) is carboxyphosphate synthetic domain. R129, R169, G175, G176, R208, I210, E215, G241, I242, H243, Q284, and E298 together coordinate ATP. The ATP-grasp 1 domain maps to 133–327 (KQLMEELEQP…IAKLAAKIAV (195 aa)). Mg(2+) contacts are provided by Q284, E298, and N300. Q284, E298, and N300 together coordinate Mn(2+). Residues 402-546 (IGVHHNEIPE…YSTYGWENES (145 aa)) form an oligomerization domain region. Residues 547–929 (IRSDKESVLV…ALYKAFEASY (383 aa)) form a carbamoyl phosphate synthetic domain region. The ATP-grasp 2 domain occupies 671–861 (EQALKELDIP…MAQVATKLIL (191 aa)). ATP is bound by residues R707, S746, I748, E752, G777, V778, H779, S780, Q820, and E832. Mg(2+) is bound by residues Q820, E832, and N834. Mn(2+) is bound by residues Q820, E832, and N834. The 129-residue stretch at 930 to 1058 (LHLPTFGNVV…ESRSFVTEAI (129 aa)) folds into the MGS-like domain. Positions 930-1058 (LHLPTFGNVV…ESRSFVTEAI (129 aa)) are allosteric domain.

Belongs to the CarB family. In terms of assembly, composed of two chains; the small (or glutamine) chain promotes the hydrolysis of glutamine to ammonia, which is used by the large (or ammonia) chain to synthesize carbamoyl phosphate. Tetramer of heterodimers (alpha,beta)4. Mg(2+) is required as a cofactor. Mn(2+) serves as cofactor.

It carries out the reaction hydrogencarbonate + L-glutamine + 2 ATP + H2O = carbamoyl phosphate + L-glutamate + 2 ADP + phosphate + 2 H(+). The enzyme catalyses hydrogencarbonate + NH4(+) + 2 ATP = carbamoyl phosphate + 2 ADP + phosphate + 2 H(+). Its pathway is amino-acid biosynthesis; L-arginine biosynthesis; carbamoyl phosphate from bicarbonate: step 1/1. It participates in pyrimidine metabolism; UMP biosynthesis via de novo pathway; (S)-dihydroorotate from bicarbonate: step 1/3. Functionally, large subunit of the glutamine-dependent carbamoyl phosphate synthetase (CPSase). CPSase catalyzes the formation of carbamoyl phosphate from the ammonia moiety of glutamine, carbonate, and phosphate donated by ATP, constituting the first step of 2 biosynthetic pathways, one leading to arginine and/or urea and the other to pyrimidine nucleotides. The large subunit (synthetase) binds the substrates ammonia (free or transferred from glutamine from the small subunit), hydrogencarbonate and ATP and carries out an ATP-coupled ligase reaction, activating hydrogencarbonate by forming carboxy phosphate which reacts with ammonia to form carbamoyl phosphate. The chain is Carbamoyl phosphate synthase large chain from Streptococcus pneumoniae serotype 19F (strain G54).